The chain runs to 405 residues: Tryptophan synthase beta chain (405 aa).

Residue Lys-98 is modified to N6-(pyridoxal phosphate)lysine.

It belongs to the TrpB family. Tetramer of two alpha and two beta chains. The cofactor is pyridoxal 5'-phosphate.

The enzyme catalyses (1S,2R)-1-C-(indol-3-yl)glycerol 3-phosphate + L-serine = D-glyceraldehyde 3-phosphate + L-tryptophan + H2O. It functions in the pathway amino-acid biosynthesis; L-tryptophan biosynthesis; L-tryptophan from chorismate: step 5/5. Functionally, the beta subunit is responsible for the synthesis of L-tryptophan from indole and L-serine. The polypeptide is Tryptophan synthase beta chain (Xanthomonas campestris pv. campestris (strain 8004)).